A 271-amino-acid polypeptide reads, in one-letter code: Aquaporin-2 (271 aa).

Topologically, residues 1 to 11 (MWELRSIAFSR) are cytoplasmic. The helical transmembrane segment at 12–32 (AVFAEFLATLLFVFFGLGSAL) threads the bilayer. Residues 33–40 (NWPQALPS) lie on the Extracellular side of the membrane. The helical transmembrane segment at 41-59 (VLQIAMAFGLGIGTLVQAL) threads the bilayer. Topologically, residues 60–64 (GHISG) are cytoplasmic. Residues 65–74 (AHINPAVTVA) constitute an intramembrane region (discontinuously helical). The NPA 1 signature appears at 68 to 70 (NPA). Residues 75–85 (CLVGCHVSVLR) lie on the Cytoplasmic side of the membrane. A helical transmembrane segment spans residues 86–107 (AAFYVAAQLLGAVAGAALLHEI). The Extracellular portion of the chain corresponds to 108–127 (TPADIRGDLAVNALSNSTTA). The N-linked (GlcNAc...) asparagine glycan is linked to N123. A helical membrane pass occupies residues 128–148 (GQAVTVELFLTLQLVLCIFAS). The Cytoplasmic segment spans residues 149 to 156 (TDERRGEN). Residues 157-176 (PGTPALSIGFSVALGHLLGI) form a helical membrane-spanning segment. Residues 177–180 (HYTG) lie on the Extracellular side of the membrane. The discontinuously helical intramembrane region spans 181–193 (CSMNPARSLAPAV). Positions 184–186 (NPA) match the NPA 2 motif. Over 194 to 201 (VTGKFDDH) the chain is Extracellular. The chain crosses the membrane as a helical span at residues 202 to 222 (WVFWIGPLVGAILGSLLYNYV). Over 223–271 (LFPPAKSLSERLAVLKGLEPDTDWEEREVRRRQSVELHSPQSLPRGTKA) the chain is Cytoplasmic. The interval 248 to 271 (EREVRRRQSVELHSPQSLPRGTKA) is disordered. The residue at position 256 (S256) is a Phosphoserine; by PKA. Residues 261–271 (SPQSLPRGTKA) show a composition bias toward polar residues.

This sequence belongs to the MIP/aquaporin (TC 1.A.8) family. In terms of assembly, homotetramer. Interacts with micropeptide MIAC; the interaction leads to a reduction of filamentous actin fibers and inhibition of the EREG/EGFR signaling pathway. In terms of processing, ser-256 phosphorylation is necessary and sufficient for expression at the apical membrane. Endocytosis is not phosphorylation-dependent. N-glycosylated. As to expression, expressed in collecting tubules in kidney medulla (at protein level). Detected in kidney.

The protein localises to the apical cell membrane. It localises to the basolateral cell membrane. It is found in the cell membrane. The protein resides in the cytoplasmic vesicle membrane. Its subcellular location is the golgi apparatus. The protein localises to the trans-Golgi network membrane. The enzyme catalyses H2O(in) = H2O(out). It catalyses the reaction glycerol(in) = glycerol(out). Forms a water-specific channel that provides the plasma membranes of renal collecting duct with high permeability to water, thereby permitting water to move in the direction of an osmotic gradient. Plays an essential role in renal water homeostasis. Could also be permeable to glycerol. In Homo sapiens (Human), this protein is Aquaporin-2.